Here is a 120-residue protein sequence, read N- to C-terminus: UPF0231 protein YacL (120 aa).

This sequence belongs to the UPF0231 family.

This Escherichia fergusonii (strain ATCC 35469 / DSM 13698 / CCUG 18766 / IAM 14443 / JCM 21226 / LMG 7866 / NBRC 102419 / NCTC 12128 / CDC 0568-73) protein is UPF0231 protein YacL.